Here is a 104-residue protein sequence, read N- to C-terminus: Cytochrome c-551 (104 aa).

Positions 1–22 (MKKILIPMLALGGALAMQPALA) are cleaved as a signal peptide. Heme c-binding residues include Cys-34, Cys-37, His-38, and Met-83.

In terms of processing, binds 1 heme c group covalently per subunit.

The protein resides in the periplasm. Functionally, electron donor for cytochrome cd1 in nitrite and nitrate respiration. The protein is Cytochrome c-551 (nirM) of Stutzerimonas stutzeri (Pseudomonas stutzeri).